Here is a 182-residue protein sequence, read N- to C-terminus: Large ribosomal subunit protein uL6 (182 aa).

This sequence belongs to the universal ribosomal protein uL6 family. As to quaternary structure, part of the 50S ribosomal subunit.

Its function is as follows. This protein binds to the 23S rRNA, and is important in its secondary structure. It is located near the subunit interface in the base of the L7/L12 stalk, and near the tRNA binding site of the peptidyltransferase center. This Methanococcus maripaludis (strain C5 / ATCC BAA-1333) protein is Large ribosomal subunit protein uL6.